Here is a 601-residue protein sequence, read N- to C-terminus: MAKLDKIRNFSIIAHIDHGKSTLADRILEITGMVSEREKKDQYLDKMELEQERGITIKAQTVRIPYKANDGEEYILNLIDTPGHVDFSYEVSRSLAASEGALLVVDSTQGVEAQTLANVFLALDHDLEIVPVLNKVDLPSSDCERVAQEIEEVIGLDCSEPLMISAKTGLNVEDVLESIVKDLPAPQGDPDAPLKALIFDSWYDSYQGVVVLFRILDGTIKKGDKIQIHSTGRTFDVTTLGVYTPEPQKAKELAAGEVGFLCASMKELNDAPVGDTITLAADPVEDPFPGFQEVKPMVFCGLYPVEPAEYEPLKAALEKLQLNDTAFSFEPETSTALGFGFRCGFLGLLHMEIIQERLEREFQAKLIATAPSVVYQARLNNGEVLEIDNPSKMPDGGDLESLAEPFCRLEIHVPNDYVGAVLKLCEEKRGIQKDMRYLTSSRVIITYEVPFAEIMYDFFDKLKSHTKGYASLDYEIIDYRESNLVKLDILINTDPVDAFSAIVHKDSAYPFGRSLALKLKRAIPRQMFEIVIQAAIGRKIIAKERVAPFRKNVTAKCYGGDITRKRKLLEKQKEGKKRMKKMGNVEIPQEAFMAVLKAGED.

Residues 5–187 (DKIRNFSIIA…SIVKDLPAPQ (183 aa)) form the tr-type G domain. Residues 17–22 (DHGKST) and 134–137 (NKVD) each bind GTP.

Belongs to the TRAFAC class translation factor GTPase superfamily. Classic translation factor GTPase family. LepA subfamily.

The protein resides in the cell inner membrane. It catalyses the reaction GTP + H2O = GDP + phosphate + H(+). Its function is as follows. Required for accurate and efficient protein synthesis under certain stress conditions. May act as a fidelity factor of the translation reaction, by catalyzing a one-codon backward translocation of tRNAs on improperly translocated ribosomes. Back-translocation proceeds from a post-translocation (POST) complex to a pre-translocation (PRE) complex, thus giving elongation factor G a second chance to translocate the tRNAs correctly. Binds to ribosomes in a GTP-dependent manner. This Maridesulfovibrio salexigens (strain ATCC 14822 / DSM 2638 / NCIMB 8403 / VKM B-1763) (Desulfovibrio salexigens) protein is Elongation factor 4.